We begin with the raw amino-acid sequence, 462 residues long: NEDD8-activating enzyme E1 regulatory subunit (462 aa).

The protein belongs to the ubiquitin-activating E1 family. ULA1 subfamily. Heterodimer of UBA3 and ULA1. The complex binds NEDD8 and UBC12.

Its pathway is protein modification; protein neddylation. Regulatory subunit of the dimeric UBA3-ULA1 E1 enzyme. E1 activates NEDD8/RUB1 by first adenylating its C-terminal glycine residue with ATP, thereafter linking this residue to the side chain of the catalytic cysteine, yielding a NEDD8-UBA3 thioester and free AMP. E1 finally transfers NEDD8 to the catalytic cysteine of UBC12. The polypeptide is NEDD8-activating enzyme E1 regulatory subunit (ULA1) (Saccharomyces cerevisiae (strain ATCC 204508 / S288c) (Baker's yeast)).